Here is a 211-residue protein sequence, read N- to C-terminus: Uracil phosphoribosyltransferase (211 aa).

5-phospho-alpha-D-ribose 1-diphosphate-binding positions include Arg-78, Arg-103, and 130 to 138 (DPMLATGGT). Uracil is bound by residues Ile-195 and 200–202 (GDA). Residue Asp-201 coordinates 5-phospho-alpha-D-ribose 1-diphosphate.

Belongs to the UPRTase family. Mg(2+) is required as a cofactor.

The enzyme catalyses UMP + diphosphate = 5-phospho-alpha-D-ribose 1-diphosphate + uracil. The protein operates within pyrimidine metabolism; UMP biosynthesis via salvage pathway; UMP from uracil: step 1/1. Allosterically activated by GTP. Its function is as follows. Catalyzes the conversion of uracil and 5-phospho-alpha-D-ribose 1-diphosphate (PRPP) to UMP and diphosphate. The protein is Uracil phosphoribosyltransferase of Arthrobacter sp. (strain FB24).